The chain runs to 214 residues: Adenylate kinase (214 aa).

ATP is bound at residue 10-15 (GAGKGT). The segment at 30–59 (STGDMFRAAIKEGTELGKQAKALMDEGKLV) is NMP. Residues Thr-31, Arg-36, 57–59 (KLV), 85–88 (GFPR), and Gln-92 contribute to the AMP site. The LID stretch occupies residues 122 to 159 (GRRVHQPSGRTYHVVYNPPKVEGKDDVTGEDLIIRQDD). ATP is bound by residues Arg-123 and 132–133 (TY). Positions 156 and 167 each coordinate AMP. Residue Lys-200 participates in ATP binding.

The protein belongs to the adenylate kinase family. As to quaternary structure, monomer.

It is found in the cytoplasm. It catalyses the reaction AMP + ATP = 2 ADP. It participates in purine metabolism; AMP biosynthesis via salvage pathway; AMP from ADP: step 1/1. Its function is as follows. Catalyzes the reversible transfer of the terminal phosphate group between ATP and AMP. Plays an important role in cellular energy homeostasis and in adenine nucleotide metabolism. In Actinobacillus pleuropneumoniae serotype 5b (strain L20), this protein is Adenylate kinase.